A 257-amino-acid chain; its full sequence is Phosphate import ATP-binding protein PstB (257 aa).

One can recognise an ABC transporter domain in the interval 4–252; it reads LKLNDVNIYY…PDNKETEDYI (249 aa). 36–43 serves as a coordination point for ATP; sequence GPSGCGKS.

It belongs to the ABC transporter superfamily. Phosphate importer (TC 3.A.1.7) family. As to quaternary structure, the complex is composed of two ATP-binding proteins (PstB), two transmembrane proteins (PstC and PstA) and a solute-binding protein (PstS).

The protein resides in the cell membrane. It catalyses the reaction phosphate(out) + ATP + H2O = ADP + 2 phosphate(in) + H(+). In terms of biological role, part of the ABC transporter complex PstSACB involved in phosphate import. Responsible for energy coupling to the transport system. This Corynebacterium efficiens (strain DSM 44549 / YS-314 / AJ 12310 / JCM 11189 / NBRC 100395) protein is Phosphate import ATP-binding protein PstB.